The primary structure comprises 458 residues: Tetracycline resistance protein (458 aa).

12 consecutive transmembrane segments (helical) span residues 12-33, 81-100, 111-129, 140-162, 165-185, 201-221, 223-240, 256-276, 297-317, 324-344, 346-365, and 432-451; these read HNQVLIWLCVLSFFSVLNEMVL, LLLFGIMVNGLGSIIGFVGH, FIQGIGAAAFPALVMVVVA, AFGLIGSLVAMGEGVGPAIGGMV, YIHWSYLLLIPTATIITVPFL, MAGIILMSAGIVFFMLFTTSY, FSFLIISILAFFIFVQHI, VFFVIGTLCGGLIFGTVAGFV, GIIFPGTMSVIIFGYIGGLLV, YVLTIGSALLSSGFLIAAFFI, AAPWIMTIIVIFVFGGLSFT, and MLILFAGIIVICWLVILNVY.

The protein belongs to the major facilitator superfamily. TCR/Tet family.

It localises to the cell membrane. Functionally, resistance to tetracycline by an active tetracycline efflux. This is an energy-dependent process that decreases the accumulation of the antibiotic in whole cells. This protein functions as a metal-tetracycline/H(+) antiporter. In Bacillus subtilis (strain 168), this protein is Tetracycline resistance protein (tetB).